Reading from the N-terminus, the 320-residue chain is Taste receptor type 2 member 109 (320 aa).

Over 1–14 the chain is Extracellular; sequence MEHFLKSIFDISKN. Residues 15 to 35 traverse the membrane as a helical segment; that stretch reads VLPIILFIELIIGIIGNGFMA. The Cytoplasmic portion of the chain corresponds to 36–62; sequence LVHCMDWVKRKKMSLVNQILTTLATSR. Residues 63–83 traverse the membrane as a helical segment; the sequence is ICLLWFMLLGLLITLLDPDLA. Over 84–94 the chain is Extracellular; the sequence is SARMMIQVASN. The chain crosses the membrane as a helical span at residues 95–115; sequence LWIIANHMSIWLATCLTVFYF. The Cytoplasmic segment spans residues 116–135; that stretch reads LKIANFSSSLFLYLKWRVEK. Residues 136–156 form a helical membrane-spanning segment; sequence VISVIFLVSLVLLFLNMLLMN. Topologically, residues 157 to 191 are extracellular; the sequence is LENDMCIAEYHQINISYSFIYHYRADCERRVLRLH. N-linked (GlcNAc...) asparagine glycosylation occurs at asparagine 170. The helical transmembrane segment at 192 to 212 threads the bilayer; that stretch reads IIILSVPFVLSLPTFLLLIFS. Residues 213–240 are Cytoplasmic-facing; sequence LWTHHKKMQQHVQGRRDASTTAHFKALQ. Residues 241–261 traverse the membrane as a helical segment; sequence TVIAFLLLYCIFILSMLLQFW. Residues 262 to 270 are Extracellular-facing; the sequence is KYELMKKPL. The helical transmembrane segment at 271 to 291 threads the bilayer; sequence FILFCHIVYGAFPSFHSYVLI. At 292–320 the chain is on the cytoplasmic side; the sequence is LGDMKLRQASLSVLLWLKCRPNYIETLDL.

It belongs to the G-protein coupled receptor T2R family.

Its subcellular location is the membrane. Its function is as follows. Putative taste receptor which may play a role in the perception of bitterness. The sequence is that of Taste receptor type 2 member 109 from Rattus norvegicus (Rat).